The primary structure comprises 72 residues: Cell division protein ZapB (72 aa).

Positions 1-71 (MSLEILDQLE…IRSLLGKFDN (71 aa)) form a coiled coil.

This sequence belongs to the ZapB family. In terms of assembly, homodimer. The ends of the coiled-coil dimer bind to each other, forming polymers. Interacts with FtsZ.

It is found in the cytoplasm. Non-essential, abundant cell division factor that is required for proper Z-ring formation. It is recruited early to the divisome by direct interaction with FtsZ, stimulating Z-ring assembly and thereby promoting cell division earlier in the cell cycle. Its recruitment to the Z-ring requires functional FtsA or ZipA. In Haemophilus influenzae (strain 86-028NP), this protein is Cell division protein ZapB.